The following is a 92-amino-acid chain: UPF0223 protein SGO_1052 (92 aa).

Belongs to the UPF0223 family.

The sequence is that of UPF0223 protein SGO_1052 from Streptococcus gordonii (strain Challis / ATCC 35105 / BCRC 15272 / CH1 / DL1 / V288).